A 332-amino-acid polypeptide reads, in one-letter code: Biotin synthase (332 aa).

Residues 53 to 282 (HFGKKVKLNM…TKEIRISGGR (230 aa)) form the Radical SAM core domain. Cysteine 71, cysteine 75, and cysteine 78 together coordinate [4Fe-4S] cluster. [2Fe-2S] cluster-binding residues include cysteine 115, cysteine 147, cysteine 207, and arginine 277.

The protein belongs to the radical SAM superfamily. Biotin synthase family. As to quaternary structure, homodimer. [4Fe-4S] cluster is required as a cofactor. It depends on [2Fe-2S] cluster as a cofactor.

The catalysed reaction is (4R,5S)-dethiobiotin + (sulfur carrier)-SH + 2 reduced [2Fe-2S]-[ferredoxin] + 2 S-adenosyl-L-methionine = (sulfur carrier)-H + biotin + 2 5'-deoxyadenosine + 2 L-methionine + 2 oxidized [2Fe-2S]-[ferredoxin]. It participates in cofactor biosynthesis; biotin biosynthesis; biotin from 7,8-diaminononanoate: step 2/2. Functionally, catalyzes the conversion of dethiobiotin (DTB) to biotin by the insertion of a sulfur atom into dethiobiotin via a radical-based mechanism. The chain is Biotin synthase from Bacillus cereus (strain ATCC 14579 / DSM 31 / CCUG 7414 / JCM 2152 / NBRC 15305 / NCIMB 9373 / NCTC 2599 / NRRL B-3711).